Consider the following 173-residue polypeptide: NEDD4-binding protein 2-like 1 (173 aa).

The tract at residues 1-35 (MEESFLESFGRLSLRQQQPPPPRPPAPPPLRGTPP) is disordered. Positions 18 to 32 (QPPPPRPPAPPPLRG) are enriched in pro residues.

In terms of assembly, interacts with dynactin subunit proteins, including DCTN4, DCTN5 and DCTN5.

Might play a role in adipocyte differentiation and triglyceride accumulation. The chain is NEDD4-binding protein 2-like 1 (N4BP2L1) from Bos taurus (Bovine).